The chain runs to 342 residues: Succinylglutamate desuccinylase (342 aa).

The Zn(2+) site is built by His-62, Glu-65, and His-158. Glu-222 is an active-site residue.

The protein belongs to the AspA/AstE family. Succinylglutamate desuccinylase subfamily. Requires Zn(2+) as cofactor.

It carries out the reaction N-succinyl-L-glutamate + H2O = L-glutamate + succinate. Its pathway is amino-acid degradation; L-arginine degradation via AST pathway; L-glutamate and succinate from L-arginine: step 5/5. Functionally, transforms N(2)-succinylglutamate into succinate and glutamate. The chain is Succinylglutamate desuccinylase from Shewanella frigidimarina (strain NCIMB 400).